A 1165-amino-acid polypeptide reads, in one-letter code: Valine--tRNA ligase (1165 aa).

The short motif at 43–53 (PNVTGSLHMGH) is the 'HIGH' region element. Residues 800-804 (KMSKT) carry the 'KMSKS' region motif. Lys803 contributes to the ATP binding site. Coiled-coil stretches lie at residues 1001-1032 (KNEDEIYEEDKQKVERLKEIISAIRAIRSDLQ) and 1097-1165 (HVDL…VLRS).

This sequence belongs to the class-I aminoacyl-tRNA synthetase family. ValS type 1 subfamily. In terms of assembly, monomer.

Its subcellular location is the cytoplasm. The enzyme catalyses tRNA(Val) + L-valine + ATP = L-valyl-tRNA(Val) + AMP + diphosphate. Its function is as follows. Catalyzes the attachment of valine to tRNA(Val). As ValRS can inadvertently accommodate and process structurally similar amino acids such as threonine, to avoid such errors, it has a 'posttransfer' editing activity that hydrolyzes mischarged Thr-tRNA(Val) in a tRNA-dependent manner. The chain is Valine--tRNA ligase from Aquifex aeolicus (strain VF5).